The following is a 279-amino-acid chain: tRNA (guanine-N(1)-)-methyltransferase (279 aa).

S-adenosyl-L-methionine contacts are provided by residues G117 and 141-146 (LGDYVL). The segment at 256-279 (WTPDGSGFRAGGDPVADSSDTNEP) is disordered.

Belongs to the RNA methyltransferase TrmD family. As to quaternary structure, homodimer.

It is found in the cytoplasm. It carries out the reaction guanosine(37) in tRNA + S-adenosyl-L-methionine = N(1)-methylguanosine(37) in tRNA + S-adenosyl-L-homocysteine + H(+). Its function is as follows. Specifically methylates guanosine-37 in various tRNAs. This Kineococcus radiotolerans (strain ATCC BAA-149 / DSM 14245 / SRS30216) protein is tRNA (guanine-N(1)-)-methyltransferase.